The chain runs to 289 residues: Glucosamine-6-phosphate deaminase 1 (289 aa).

D72 serves as the catalytic Proton acceptor; for enolization step. D141 serves as the catalytic For ring-opening step. H143 serves as the catalytic Proton acceptor; for ring-opening step. E148 (for ring-opening step) is an active-site residue. T161 bears the Phosphothreonine mark.

This sequence belongs to the glucosamine/galactosamine-6-phosphate isomerase family. In terms of assembly, homohexamer. In terms of tissue distribution, widely expressed. Detected in brain, liver, kidney, muscle, ovary, testis, spermatids and spermatozoa. In spermatids, located close to the developing acrosome vesicle. In spermatozoa, found close to the acrosomal region.

It localises to the cytoplasm. The enzyme catalyses alpha-D-glucosamine 6-phosphate + H2O = beta-D-fructose 6-phosphate + NH4(+). The protein operates within nucleotide-sugar biosynthesis; UDP-N-acetyl-alpha-D-glucosamine biosynthesis; alpha-D-glucosamine 6-phosphate from D-fructose 6-phosphate: step 1/1. With respect to regulation, allosterically activated by N-acetylglucosamine-6-phosphate (GlcNAc6P). In terms of biological role, catalyzes the reversible conversion of alpha-D-glucosamine 6-phosphate (GlcN-6P) into beta-D-fructose 6-phosphate (Fru-6P) and ammonium ion, a regulatory reaction step in de novo uridine diphosphate-N-acetyl-alpha-D-glucosamine (UDP-GlcNAc) biosynthesis via hexosamine pathway. Deamination is coupled to aldo-keto isomerization mediating the metabolic flux from UDP-GlcNAc toward Fru-6P. At high ammonium level can drive amination and isomerization of Fru-6P toward hexosamines and UDP-GlcNAc synthesis. Has a role in fine tuning the metabolic fluctuations of cytosolic UDP-GlcNAc and their effects on hyaluronan synthesis that occur during tissue remodeling. Seems to trigger calcium oscillations in mammalian eggs. These oscillations serve as the essential trigger for egg activation and early development of the embryo. The polypeptide is Glucosamine-6-phosphate deaminase 1 (Mus musculus (Mouse)).